A 209-amino-acid polypeptide reads, in one-letter code: PRA1 family protein E (209 aa).

Positions 1–20 are disordered; that stretch reads MNQKPPPYGYGGAGGGGVGP. Gly residues predominate over residues 9-19; that stretch reads GYGGAGGGGVG. Helical transmembrane passes span 90-110, 132-152, and 155-175; these read IVFLGLIYHPMSMIAFIVVFI, VDDKIVLVLLSLVTVLALVYT, and GENVLVSLIIGLLIVGAHGAF.

The protein belongs to the PRA1 family. Interacts with PRA1B1, PRA1B2, PRA1B3, PRA1B4, PRA1B5 and PRA1B6. In terms of tissue distribution, expressed in hypocotyls, roots, lateral roots, columella cells, leaves and shoot apex.

The protein localises to the endosome membrane. May be involved in both secretory and endocytic intracellular trafficking in the endosomal/prevacuolar compartments. In Arabidopsis thaliana (Mouse-ear cress), this protein is PRA1 family protein E (PRA1E).